The primary structure comprises 227 residues: Class I hydrophobin A (227 aa).

A signal peptide spans 1–18; sequence MQFSLSAIVLGLAATVYA. The N-linked (GlcNAc...) asparagine glycan is linked to asparagine 50. 3 cysteine pairs are disulfide-bonded: cysteine 60-cysteine 138, cysteine 68-cysteine 132, and cysteine 69-cysteine 109.

This sequence belongs to the fungal hydrophobin family.

The protein resides in the secreted. The protein localises to the cell wall. Its function is as follows. Aerial growth, conidiation, and dispersal of filamentous fungi in the environment rely upon a capability of their secreting small amphipathic proteins called hydrophobins (HPBs) with low sequence identity. Class I can self-assemble into an outermost layer of rodlet bundles on aerial cell surfaces, conferring cellular hydrophobicity that supports fungal growth, development and dispersal; whereas Class II form highly ordered films at water-air interfaces through intermolecular interactions but contribute nothing to the rodlet structure. In P.expansum, hydrophobins contribute to germination, tolerance to cold stress and mycotoxins patulin and citrinin production. HfbA and HfbB are essential for fungal surface hydrophobicity and HfbA mediates air and water dispersal. The protein is Class I hydrophobin A of Penicillium expansum (Blue mold rot fungus).